Consider the following 150-residue polypeptide: Arginine repressor (150 aa).

This sequence belongs to the ArgR family.

The protein resides in the cytoplasm. The protein operates within amino-acid biosynthesis; L-arginine biosynthesis [regulation]. In terms of biological role, regulates arginine biosynthesis genes. In Staphylococcus haemolyticus (strain JCSC1435), this protein is Arginine repressor.